The following is a 255-amino-acid chain: Imidazole glycerol phosphate synthase subunit HisF (255 aa).

Residues D11 and D130 contribute to the active site.

Belongs to the HisA/HisF family. Heterodimer of HisH and HisF.

The protein resides in the cytoplasm. It carries out the reaction 5-[(5-phospho-1-deoxy-D-ribulos-1-ylimino)methylamino]-1-(5-phospho-beta-D-ribosyl)imidazole-4-carboxamide + L-glutamine = D-erythro-1-(imidazol-4-yl)glycerol 3-phosphate + 5-amino-1-(5-phospho-beta-D-ribosyl)imidazole-4-carboxamide + L-glutamate + H(+). The protein operates within amino-acid biosynthesis; L-histidine biosynthesis; L-histidine from 5-phospho-alpha-D-ribose 1-diphosphate: step 5/9. Functionally, IGPS catalyzes the conversion of PRFAR and glutamine to IGP, AICAR and glutamate. The HisF subunit catalyzes the cyclization activity that produces IGP and AICAR from PRFAR using the ammonia provided by the HisH subunit. This Prochlorococcus marinus subsp. pastoris (strain CCMP1986 / NIES-2087 / MED4) protein is Imidazole glycerol phosphate synthase subunit HisF.